We begin with the raw amino-acid sequence, 436 residues long: UPF0597 protein YhaM (436 aa).

It belongs to the UPF0597 family.

This Escherichia coli (strain SE11) protein is UPF0597 protein YhaM.